A 105-amino-acid polypeptide reads, in one-letter code: Small ribosomal subunit protein uS10 (105 aa).

This sequence belongs to the universal ribosomal protein uS10 family. In terms of assembly, part of the 30S ribosomal subunit.

Functionally, involved in the binding of tRNA to the ribosomes. The protein is Small ribosomal subunit protein uS10 of Rickettsia typhi (strain ATCC VR-144 / Wilmington).